The sequence spans 80 residues: uncharacterized protein (80 aa).

Positions 1 to 21 are cleaved as a signal peptide; that stretch reads MKKVLYGIFAISALAATSAWA. A disordered region spans residues 59–80; the sequence is AATGGGDGSNTGTTTTTTTSTQ. Residues 68–80 show a composition bias toward low complexity; sequence NTGTTTTTTTSTQ.

This is an uncharacterized protein from Escherichia coli O157:H7.